Reading from the N-terminus, the 400-residue chain is Argininosuccinate synthase (400 aa).

8-16 (AYSGGLDTS) provides a ligand contact to ATP. Y87 is a binding site for L-citrulline. G117 provides a ligand contact to ATP. Residues T119, N123, and D124 each coordinate L-aspartate. N123 contributes to the L-citrulline binding site. L-citrulline is bound by residues R127, S175, E260, and Y272.

It belongs to the argininosuccinate synthase family. Type 1 subfamily. Homotetramer.

Its subcellular location is the cytoplasm. The catalysed reaction is L-citrulline + L-aspartate + ATP = 2-(N(omega)-L-arginino)succinate + AMP + diphosphate + H(+). It functions in the pathway amino-acid biosynthesis; L-arginine biosynthesis; L-arginine from L-ornithine and carbamoyl phosphate: step 2/3. The sequence is that of Argininosuccinate synthase from Mycobacterium sp. (strain KMS).